The chain runs to 346 residues: Selenide, water dikinase (346 aa).

Residue Sec17 is part of the active site. A non-standard amino acid (selenocysteine) is located at residue Sec17. Residues Lys20 and 47-49 contribute to the ATP site; that span reads TSD. Asp50 serves as a coordination point for Mg(2+). ATP is bound by residues Asp67, Asp90, and 138–140; that span reads GHT. Residue Asp90 coordinates Mg(2+). Asp226 contributes to the Mg(2+) binding site.

It belongs to the selenophosphate synthase 1 family. Class I subfamily. Homodimer. Requires Mg(2+) as cofactor.

The catalysed reaction is hydrogenselenide + ATP + H2O = selenophosphate + AMP + phosphate + 2 H(+). Its function is as follows. Synthesizes selenophosphate from selenide and ATP. This chain is Selenide, water dikinase, found in Trichlorobacter lovleyi (strain ATCC BAA-1151 / DSM 17278 / SZ) (Geobacter lovleyi).